The chain runs to 709 residues: Leucine-rich repeat and calponin homology domain-containing protein 1 (709 aa).

The segment covering 24-37 (LHQHHQHHQHHQHH) has biased composition (basic residues). The segment at 24–49 (LHQHHQHHQHHQHHGGTGGTGFNLPL) is disordered. 9 LRR repeats span residues 60-83 (AANSGGLNLSARKLKEFPRTTAPG), 86-108 (LSDTVRADLSKNRLVEVPMELCQ), 109-131 (FVSLEILNLYHNCIRVIPEAIVN), 132-155 (LQMLTHLNLSRNQLSALPACLCGL), 157-176 (LKVLIASNNKLGSLPEEIGQ), 177-199 (LKQLMELDVSCNEITALPQQIGQ), 200-223 (LKSLRELNVRRNYLKVLPPELVDL), 225-244 (LVKFDFSCNKVLVIPVCFRE), and 245-268 (MKQLQVLLLENNPLQSPPAQICTK). Composition is skewed to basic and acidic residues over residues 301–312 (HQHVEDSKKDSD) and 381–390 (QEREQLAGRA). A disordered region spans residues 301-390 (HQHVEDSKKD…QEREQLAGRA (90 aa)). Phosphoserine occurs at positions 395, 518, and 522. A disordered region spans residues 504-526 (SNGSQYSPNEIRENSPSVSPTAN). Thr581 bears the Phosphothreonine mark. Residues 589–702 (MREEKELVEQ…TTVQALLDVT (114 aa)) form the Calponin-homology (CH) domain.

In terms of assembly, interacts (via LRR repeats) with unphosphorylated DOCK8 (via DHR-2 domain); the interaction prevents the association between DOCK8 and CDC42.

It is found in the cytoplasm. Its function is as follows. Acts as a negative regulator of GTPase CDC42 by sequestering CDC42-guanine exchange factor DOCK8. Probably by preventing CDC42 activation, negatively regulates CD4(+) T-cell migration in response to chemokine stimulation. The protein is Leucine-rich repeat and calponin homology domain-containing protein 1 (Lrch1) of Mus musculus (Mouse).